The following is a 544-amino-acid chain: CTP synthase (544 aa).

The interval 1 to 265 (MTQYIFITGG…DDLVVKHFGL (265 aa)) is amidoligase domain. Position 13 (Ser13) interacts with CTP. A UTP-binding site is contributed by Ser13. Residues 14–19 (SLGKGI) and Asp71 contribute to the ATP site. Mg(2+)-binding residues include Asp71 and Glu139. Residues 146-148 (DIE), 186-191 (KTKPTQ), and Lys222 contribute to the CTP site. UTP-binding positions include 186–191 (KTKPTQ) and Lys222. A Glutamine amidotransferase type-1 domain is found at 290–541 (TVAMVGKYVN…IAAALDYQTE (252 aa)). Gly351 contributes to the L-glutamine binding site. Cys378 (nucleophile; for glutamine hydrolysis) is an active-site residue. Residues 379–382 (LGLQ), Glu402, and Arg469 contribute to the L-glutamine site. Residues His514 and Glu516 contribute to the active site.

It belongs to the CTP synthase family. Homotetramer.

The catalysed reaction is UTP + L-glutamine + ATP + H2O = CTP + L-glutamate + ADP + phosphate + 2 H(+). It carries out the reaction L-glutamine + H2O = L-glutamate + NH4(+). The enzyme catalyses UTP + NH4(+) + ATP = CTP + ADP + phosphate + 2 H(+). The protein operates within pyrimidine metabolism; CTP biosynthesis via de novo pathway; CTP from UDP: step 2/2. Allosterically activated by GTP, when glutamine is the substrate; GTP has no effect on the reaction when ammonia is the substrate. The allosteric effector GTP functions by stabilizing the protein conformation that binds the tetrahedral intermediate(s) formed during glutamine hydrolysis. Inhibited by the product CTP, via allosteric rather than competitive inhibition. Its function is as follows. Catalyzes the ATP-dependent amination of UTP to CTP with either L-glutamine or ammonia as the source of nitrogen. Regulates intracellular CTP levels through interactions with the four ribonucleotide triphosphates. This chain is CTP synthase, found in Dichelobacter nodosus (strain VCS1703A).